Here is a 394-residue protein sequence, read N- to C-terminus: LL-diaminopimelate aminotransferase (394 aa).

Residues Tyr14 and Gly41 each coordinate substrate. Residues Tyr71, 104–105 (AK), Tyr128, Asn174, Tyr205, and 233–235 (SFS) contribute to the pyridoxal 5'-phosphate site. Residues Lys105, Tyr128, and Asn174 each contribute to the substrate site. Lys236 is subject to N6-(pyridoxal phosphate)lysine. Pyridoxal 5'-phosphate contacts are provided by Arg244 and Asn275. Asn275 and Arg369 together coordinate substrate.

This sequence belongs to the class-I pyridoxal-phosphate-dependent aminotransferase family. LL-diaminopimelate aminotransferase subfamily. As to quaternary structure, homodimer. It depends on pyridoxal 5'-phosphate as a cofactor.

It catalyses the reaction (2S,6S)-2,6-diaminopimelate + 2-oxoglutarate = (S)-2,3,4,5-tetrahydrodipicolinate + L-glutamate + H2O + H(+). The protein operates within amino-acid biosynthesis; L-lysine biosynthesis via DAP pathway; LL-2,6-diaminopimelate from (S)-tetrahydrodipicolinate (aminotransferase route): step 1/1. Functionally, involved in the synthesis of meso-diaminopimelate (m-DAP or DL-DAP), required for both lysine and peptidoglycan biosynthesis. Catalyzes the direct conversion of tetrahydrodipicolinate to LL-diaminopimelate. This is LL-diaminopimelate aminotransferase from Chlamydia trachomatis serovar L2b (strain UCH-1/proctitis).